A 309-amino-acid chain; its full sequence is Wall-associated proteinase (309 aa).

Residues asparagine 190 and asparagine 295 are each glycosylated (N-linked (GlcNAc...) asparagine).

The protein resides in the secreted. It is found in the cell wall. Its subcellular location is the membrane. Its function is as follows. May participate in wall plasticization and/or intussusception or in cell wall turnover. The polypeptide is Wall-associated proteinase (Coccidioides immitis (strain RS) (Valley fever fungus)).